Consider the following 86-residue polypeptide: Small ribosomal subunit protein bS16 (86 aa).

This sequence belongs to the bacterial ribosomal protein bS16 family.

The sequence is that of Small ribosomal subunit protein bS16 from Xanthomonas campestris pv. campestris (strain 8004).